The following is a 70-amino-acid chain: Cytochrome c oxidase subunit 8B, mitochondrial (70 aa).

The transit peptide at methionine 1–histidine 24 directs the protein to the mitochondrion. Topologically, residues isoleucine 25–serine 35 are mitochondrial matrix. Residues proline 36 to tyrosine 59 form a helical membrane-spanning segment. Residues histidine 60–alanine 70 lie on the Mitochondrial intermembrane side of the membrane.

Belongs to the cytochrome c oxidase VIII family. As to quaternary structure, component of the cytochrome c oxidase (complex IV, CIV), a multisubunit enzyme composed of 14 subunits. The complex is composed of a catalytic core of 3 subunits MT-CO1, MT-CO2 and MT-CO3, encoded in the mitochondrial DNA, and 11 supernumerary subunits COX4I1 (or COX4I2), COX5A, COX5B, COX6A2 (or COX6A1), COX6B1 (or COX6B2), COX6C, COX7A1 (or COX7A2), COX7B, COX7C, COX8B and NDUFA4, which are encoded in the nuclear genome. The complex exists as a monomer or a dimer and forms supercomplexes (SCs) in the inner mitochondrial membrane with NADH-ubiquinone oxidoreductase (complex I, CI) and ubiquinol-cytochrome c oxidoreductase (cytochrome b-c1 complex, complex III, CIII), resulting in different assemblies (supercomplex SCI(1)III(2)IV(1) and megacomplex MCI(2)III(2)IV(2)).

The protein resides in the mitochondrion inner membrane. It participates in energy metabolism; oxidative phosphorylation. Functionally, component of the cytochrome c oxidase, the last enzyme in the mitochondrial electron transport chain which drives oxidative phosphorylation. The respiratory chain contains 3 multisubunit complexes succinate dehydrogenase (complex II, CII), ubiquinol-cytochrome c oxidoreductase (cytochrome b-c1 complex, complex III, CIII) and cytochrome c oxidase (complex IV, CIV), that cooperate to transfer electrons derived from NADH and succinate to molecular oxygen, creating an electrochemical gradient over the inner membrane that drives transmembrane transport and the ATP synthase. Cytochrome c oxidase is the component of the respiratory chain that catalyzes the reduction of oxygen to water. Electrons originating from reduced cytochrome c in the intermembrane space (IMS) are transferred via the dinuclear copper A center (CU(A)) of subunit 2 and heme A of subunit 1 to the active site in subunit 1, a binuclear center (BNC) formed by heme A3 and copper B (CU(B)). The BNC reduces molecular oxygen to 2 water molecules using 4 electrons from cytochrome c in the IMS and 4 protons from the mitochondrial matrix. The protein is Cytochrome c oxidase subunit 8B, mitochondrial (COX8B) of Bos taurus (Bovine).